The following is a 104-amino-acid chain: Large ribosomal subunit protein uL24 (104 aa).

Belongs to the universal ribosomal protein uL24 family. In terms of assembly, part of the 50S ribosomal subunit.

Functionally, one of two assembly initiator proteins, it binds directly to the 5'-end of the 23S rRNA, where it nucleates assembly of the 50S subunit. One of the proteins that surrounds the polypeptide exit tunnel on the outside of the subunit. This Shewanella denitrificans (strain OS217 / ATCC BAA-1090 / DSM 15013) protein is Large ribosomal subunit protein uL24.